The primary structure comprises 430 residues: Enolase (430 aa).

Position 162 (Gln162) interacts with (2R)-2-phosphoglycerate. Glu204 acts as the Proton donor in catalysis. Mg(2+) contacts are provided by Asp242, Glu289, and Asp316. Residues Lys341, Arg370, Ser371, and Lys392 each coordinate (2R)-2-phosphoglycerate. Lys341 serves as the catalytic Proton acceptor.

It belongs to the enolase family. The cofactor is Mg(2+).

It localises to the cytoplasm. The protein resides in the secreted. The protein localises to the cell surface. It catalyses the reaction (2R)-2-phosphoglycerate = phosphoenolpyruvate + H2O. It functions in the pathway carbohydrate degradation; glycolysis; pyruvate from D-glyceraldehyde 3-phosphate: step 4/5. Its function is as follows. Catalyzes the reversible conversion of 2-phosphoglycerate (2-PG) into phosphoenolpyruvate (PEP). It is essential for the degradation of carbohydrates via glycolysis. This is Enolase from Flavobacterium johnsoniae (strain ATCC 17061 / DSM 2064 / JCM 8514 / BCRC 14874 / CCUG 350202 / NBRC 14942 / NCIMB 11054 / UW101) (Cytophaga johnsonae).